Consider the following 246-residue polypeptide: MISDSMTVEEIRLHLGLALKEKDFVVDKTGVKTIEIIGASFVADEPFIFGALNDEYIQRELEWYKSKSLFVKDIPGETPKIWQQVASSKGEINSNYGWAIWSEDNYAQYDMCLAELGQNPDSRRGIMIYTRPSMQFDYNKDGMSDFMCTNTVQYLIRDKKINAVVNMRSNDVVFGFRNDYAWQKYVLDKLVSDLNAGDSTRQYKAGSIIWNVGSLHVYSRHFYLVDHWWNTGETHIVKKDYNGEWK.

Residue C148 is part of the active site.

Belongs to the thymidylate synthase family.

It carries out the reaction dCMP + (6R)-5,10-methylene-5,6,7,8-tetrahydrofolate + H2O = 5-hydroxymethyl-dCMP + (6S)-5,6,7,8-tetrahydrofolate. This is Deoxycytidylate 5-hydroxymethyltransferase (42) from Escherichia coli (Bacteriophage T2).